The following is a 431-amino-acid chain: MARTDAMAPRTLLLVLSLGYAFGFNEPLNVVSHLNDDWFLFGDSRSDCNHINNLSQQNYNYMDINPELCKSGKISAKAGNSLFKSFHFTDFYNYTGEGSQIIFYEGVNFTPYVGFKCLNNGDNNRWMGNKARFYTQLYQKMAHYRSLSVINITYTYNGSAGPVSMCKHIANGVTLTLNNPTFIGKEVSKPDYYYESEANFTLQGCDEFIVPLCVFNGQYLSSKLYYDDSQYYYNVDTGVLYGFNSTLNITSGLDLTCIYLALTPGNYISISNELLLTVPSKAICLRKPKAFTPVQVVDSRWHSNRQSDNMTAIACQLPYCYFRNTTSDYNGVYDSHHGDAGFTSILAGLMYNVSCLAQQGAFVYNNVSSSWPQYPYGHCPTAANIVFMAPVCMYDPLPVILLGVLLGIAVLIIVFLMFYFMTDSGVRLHEA.

Positions 1–21 (MARTDAMAPRTLLLVLSLGYA) are cleaved as a signal peptide. An esterase domain 1 region spans residues 11–131 (TLLLVLSLGY…DNNRWMGNKA (121 aa)). At 22–399 (FGFNEPLNVV…PVCMYDPLPV (378 aa)) the chain is on the virion surface side. Serine 44 functions as the Nucleophile in the catalytic mechanism. Cysteine 48 and cysteine 69 are disulfide-bonded. N-linked (GlcNAc...) asparagine; by host glycans are attached at residues asparagine 53, asparagine 93, asparagine 151, asparagine 157, asparagine 199, asparagine 244, asparagine 248, and asparagine 309. Cysteine 117 and cysteine 166 are oxidised to a cystine. Residues 132–274 (RFYTQLYQKM…GNYISISNEL (143 aa)) are receptor binding. Cystine bridges form between cysteine 205–cysteine 284 and cysteine 213–cysteine 257. Residues 275–387 (LLTVPSKAIC…HCPTAANIVF (113 aa)) form an esterase domain 2 region. Cysteines 315 and 320 form a disulfide. Asparagine 324 is a glycosylation site (N-linked (GlcNAc...) asparagine; by host). Catalysis depends on charge relay system residues aspartate 334 and histidine 337. N-linked (GlcNAc...) asparagine; by host glycosylation is found at asparagine 352 and asparagine 366. A disulfide bond links cysteine 355 and cysteine 379. A helical transmembrane segment spans residues 400–420 (ILLGVLLGIAVLIIVFLMFYF). Residues 421-431 (MTDSGVRLHEA) lie on the Intravirion side of the membrane.

The protein belongs to the influenza type C/coronaviruses hemagglutinin-esterase family. As to quaternary structure, homodimer; disulfide-linked. Forms a complex with the M protein in the pre-Golgi. Associates then with S-M complex to form a ternary complex S-M-HE. Post-translationally, N-glycosylated in the host RER.

It is found in the virion membrane. Its subcellular location is the host cell membrane. It catalyses the reaction N-acetyl-9-O-acetylneuraminate + H2O = N-acetylneuraminate + acetate + H(+). The enzyme catalyses N-acetyl-4-O-acetylneuraminate + H2O = N-acetylneuraminate + acetate + H(+). Functionally, structural protein that makes short spikes at the surface of the virus. Contains receptor binding and receptor-destroying activities. Mediates de-O-acetylation of N-acetyl-4-O-acetylneuraminic acid, which is probably the receptor determinant recognized by the virus on the surface of erythrocytes and susceptible cells. This receptor-destroying activity is important for virus release as it probably helps preventing self-aggregation and ensures the efficient spread of the progeny virus from cell to cell. May serve as a secondary viral attachment protein for initiating infection, the spike protein being the major one. May become a target for both the humoral and the cellular branches of the immune system. This Murine coronavirus (strain DVIM) (MHV-DVIM) protein is Hemagglutinin-esterase.